A 275-amino-acid chain; its full sequence is Nitrate import permease protein NrtB (275 aa).

Transmembrane regions (helical) follow at residues 25 to 45 (VIRPAVAIAVLLVVWQILCSG), 89 to 109 (VAVGFSAAAVVGIALGILIGS), 120 to 140 (IFQVLRTIPPLAWLPIALAAL), 147 to 167 (AIFVIFITAIWPIVINTTVGA), 189 to 209 (FFNILFPAAVPYIFTGLRIGI), 213 to 233 (WLAIVAAEMLIGGVGIGFFIW), and 238 to 258 (SSLISEIIIALIYVGIVGLLL). Positions 82–262 (IFASLTRVAV…IVGLLLDRFI (181 aa)) constitute an ABC transmembrane type-1 domain.

Belongs to the binding-protein-dependent transport system permease family. CysTW subfamily. In terms of assembly, the complex is composed of two ATP-binding proteins (NrtC and NrtD), two transmembrane proteins (NrtB) and a solute-binding protein (NrtA).

It is found in the cell inner membrane. Part of the ABC transporter complex NrtABCD involved in nitrate uptake. The complex is probably also involved in nitrite transport. Probably responsible for the translocation of the substrate across the membrane. In Synechocystis sp. (strain ATCC 27184 / PCC 6803 / Kazusa), this protein is Nitrate import permease protein NrtB (nrtB).